Here is a 473-residue protein sequence, read N- to C-terminus: Siroheme synthase (473 aa).

The segment at 1–203 (MNYLPIFIDL…GNKEQAINVL (203 aa)) is precorrin-2 dehydrogenase /sirohydrochlorin ferrochelatase. Residues 22-23 (EV) and 43-44 (KE) each bind NAD(+). Ser-128 is subject to Phosphoserine. The segment at 215–473 (GEIILVGAGP…KNKFSTLTFI (259 aa)) is uroporphyrinogen-III C-methyltransferase. Pro-224 contributes to the S-adenosyl-L-methionine binding site. Asp-247 (proton acceptor) is an active-site residue. Lys-269 functions as the Proton donor in the catalytic mechanism. S-adenosyl-L-methionine is bound by residues 300–302 (GGD), Ile-305, Met-382, and Gly-411.

The protein in the N-terminal section; belongs to the precorrin-2 dehydrogenase / sirohydrochlorin ferrochelatase family. It in the C-terminal section; belongs to the precorrin methyltransferase family.

It catalyses the reaction uroporphyrinogen III + 2 S-adenosyl-L-methionine = precorrin-2 + 2 S-adenosyl-L-homocysteine + H(+). It carries out the reaction precorrin-2 + NAD(+) = sirohydrochlorin + NADH + 2 H(+). The catalysed reaction is siroheme + 2 H(+) = sirohydrochlorin + Fe(2+). Its pathway is cofactor biosynthesis; adenosylcobalamin biosynthesis; precorrin-2 from uroporphyrinogen III: step 1/1. It participates in cofactor biosynthesis; adenosylcobalamin biosynthesis; sirohydrochlorin from precorrin-2: step 1/1. The protein operates within porphyrin-containing compound metabolism; siroheme biosynthesis; precorrin-2 from uroporphyrinogen III: step 1/1. It functions in the pathway porphyrin-containing compound metabolism; siroheme biosynthesis; siroheme from sirohydrochlorin: step 1/1. Its pathway is porphyrin-containing compound metabolism; siroheme biosynthesis; sirohydrochlorin from precorrin-2: step 1/1. Its function is as follows. Multifunctional enzyme that catalyzes the SAM-dependent methylations of uroporphyrinogen III at position C-2 and C-7 to form precorrin-2 via precorrin-1. Then it catalyzes the NAD-dependent ring dehydrogenation of precorrin-2 to yield sirohydrochlorin. Finally, it catalyzes the ferrochelation of sirohydrochlorin to yield siroheme. The polypeptide is Siroheme synthase (Buchnera aphidicola subsp. Acyrthosiphon pisum (strain APS) (Acyrthosiphon pisum symbiotic bacterium)).